A 221-amino-acid polypeptide reads, in one-letter code: Lipoprotein-releasing system ATP-binding protein LolD (221 aa).

The 213-residue stretch at 8 to 220 (LKMISKHYKQ…YNLKHGLLNI (213 aa)) folds into the ABC transporter domain. 42–49 (GSSGSGKS) serves as a coordination point for ATP.

This sequence belongs to the ABC transporter superfamily. Lipoprotein translocase (TC 3.A.1.125) family. The complex is composed of two ATP-binding proteins (LolD) and two transmembrane proteins (LolC and LolE).

It is found in the cell inner membrane. Part of the ABC transporter complex LolCDE involved in the translocation of mature outer membrane-directed lipoproteins, from the inner membrane to the periplasmic chaperone, LolA. Responsible for the formation of the LolA-lipoprotein complex in an ATP-dependent manner. The sequence is that of Lipoprotein-releasing system ATP-binding protein LolD from Rickettsia prowazekii (strain Madrid E).